Here is a 494-residue protein sequence, read N- to C-terminus: Guanosine-5'-triphosphate,3'-diphosphate pyrophosphatase (494 aa).

The protein belongs to the GppA/Ppx family. GppA subfamily.

The enzyme catalyses guanosine 3'-diphosphate 5'-triphosphate + H2O = guanosine 3',5'-bis(diphosphate) + phosphate + H(+). It participates in purine metabolism; ppGpp biosynthesis; ppGpp from GTP: step 2/2. Functionally, catalyzes the conversion of pppGpp to ppGpp. Guanosine pentaphosphate (pppGpp) is a cytoplasmic signaling molecule which together with ppGpp controls the 'stringent response', an adaptive process that allows bacteria to respond to amino acid starvation, resulting in the coordinated regulation of numerous cellular activities. This chain is Guanosine-5'-triphosphate,3'-diphosphate pyrophosphatase, found in Citrobacter koseri (strain ATCC BAA-895 / CDC 4225-83 / SGSC4696).